The primary structure comprises 504 residues: Maturase K (504 aa).

The protein belongs to the intron maturase 2 family. MatK subfamily.

It localises to the plastid. Its subcellular location is the chloroplast. Functionally, usually encoded in the trnK tRNA gene intron. Probably assists in splicing its own and other chloroplast group II introns. This Quercus lyrata (Overcup oak) protein is Maturase K.